Consider the following 314-residue polypeptide: ATP synthase gamma chain (314 aa).

This sequence belongs to the ATPase gamma chain family. F-type ATPases have 2 components, CF(1) - the catalytic core - and CF(0) - the membrane proton channel. CF(1) has five subunits: alpha(3), beta(3), gamma(1), delta(1), epsilon(1). CF(0) has three main subunits: a, b and c.

The protein resides in the cellular thylakoid membrane. Its function is as follows. Produces ATP from ADP in the presence of a proton gradient across the membrane. The gamma chain is believed to be important in regulating ATPase activity and the flow of protons through the CF(0) complex. This Synechococcus sp. (strain JA-2-3B'a(2-13)) (Cyanobacteria bacterium Yellowstone B-Prime) protein is ATP synthase gamma chain.